The primary structure comprises 181 residues: Ribulose bisphosphate carboxylase small subunit, chloroplastic (181 aa).

The N-terminal 54 residues, 1 to 54, are a transit peptide targeting the chloroplast; that stretch reads MASSMLSSAAVVTSQLQATMVAPFTGLKSSAAFPVTRKTNTDITSIASNGGRVS.

This sequence belongs to the RuBisCO small chain family. Heterohexadecamer of 8 large and 8 small subunits.

The protein localises to the plastid. It localises to the chloroplast. RuBisCO catalyzes two reactions: the carboxylation of D-ribulose 1,5-bisphosphate, the primary event in carbon dioxide fixation, as well as the oxidative fragmentation of the pentose substrate. Both reactions occur simultaneously and in competition at the same active site. Although the small subunit is not catalytic it is essential for maximal activity. The chain is Ribulose bisphosphate carboxylase small subunit, chloroplastic from Raphanus sativus (Radish).